Reading from the N-terminus, the 429-residue chain is Enolase (429 aa).

Residue Q164 coordinates (2R)-2-phosphoglycerate. Catalysis depends on E206, which acts as the Proton donor. 3 residues coordinate Mg(2+): D243, E286, and D313. The (2R)-2-phosphoglycerate site is built by K338, R367, S368, and K389. Residue K338 is the Proton acceptor of the active site.

The protein belongs to the enolase family. The cofactor is Mg(2+).

The protein localises to the cytoplasm. The protein resides in the secreted. It is found in the cell surface. It carries out the reaction (2R)-2-phosphoglycerate = phosphoenolpyruvate + H2O. It functions in the pathway carbohydrate degradation; glycolysis; pyruvate from D-glyceraldehyde 3-phosphate: step 4/5. Catalyzes the reversible conversion of 2-phosphoglycerate (2-PG) into phosphoenolpyruvate (PEP). It is essential for the degradation of carbohydrates via glycolysis. The sequence is that of Enolase from Thermosipho africanus (strain TCF52B).